A 239-amino-acid chain; its full sequence is Ribonuclease PH (239 aa).

Phosphate-binding positions include Arg86 and 124–126; that span reads GTR.

It belongs to the RNase PH family. In terms of assembly, homohexameric ring arranged as a trimer of dimers.

It catalyses the reaction tRNA(n+1) + phosphate = tRNA(n) + a ribonucleoside 5'-diphosphate. Functionally, phosphorolytic 3'-5' exoribonuclease that plays an important role in tRNA 3'-end maturation. Removes nucleotide residues following the 3'-CCA terminus of tRNAs; can also add nucleotides to the ends of RNA molecules by using nucleoside diphosphates as substrates, but this may not be physiologically important. Probably plays a role in initiation of 16S rRNA degradation (leading to ribosome degradation) during starvation. This is Ribonuclease PH from Sinorhizobium medicae (strain WSM419) (Ensifer medicae).